A 131-amino-acid polypeptide reads, in one-letter code: Phosphoribosyl-AMP cyclohydrolase (131 aa).

D90 is a binding site for Mg(2+). C91 is a binding site for Zn(2+). Mg(2+) contacts are provided by D92 and D94. Zn(2+) is bound by residues C107 and C114.

Belongs to the PRA-CH family. As to quaternary structure, homodimer. It depends on Mg(2+) as a cofactor. Requires Zn(2+) as cofactor.

The protein resides in the cytoplasm. It carries out the reaction 1-(5-phospho-beta-D-ribosyl)-5'-AMP + H2O = 1-(5-phospho-beta-D-ribosyl)-5-[(5-phospho-beta-D-ribosylamino)methylideneamino]imidazole-4-carboxamide. It participates in amino-acid biosynthesis; L-histidine biosynthesis; L-histidine from 5-phospho-alpha-D-ribose 1-diphosphate: step 3/9. Its function is as follows. Catalyzes the hydrolysis of the adenine ring of phosphoribosyl-AMP. This is Phosphoribosyl-AMP cyclohydrolase from Hyphomonas neptunium (strain ATCC 15444).